We begin with the raw amino-acid sequence, 97 residues long: Co-chaperonin GroES (97 aa).

Belongs to the GroES chaperonin family. Heptamer of 7 subunits arranged in a ring. Interacts with the chaperonin GroEL.

The protein resides in the cytoplasm. Together with the chaperonin GroEL, plays an essential role in assisting protein folding. The GroEL-GroES system forms a nano-cage that allows encapsulation of the non-native substrate proteins and provides a physical environment optimized to promote and accelerate protein folding. GroES binds to the apical surface of the GroEL ring, thereby capping the opening of the GroEL channel. In Klebsiella pneumoniae (strain 342), this protein is Co-chaperonin GroES.